The sequence spans 519 residues: Putative thymidine phosphorylase (519 aa).

It belongs to the thymidine/pyrimidine-nucleoside phosphorylase family. Type 2 subfamily.

It carries out the reaction thymidine + phosphate = 2-deoxy-alpha-D-ribose 1-phosphate + thymine. This chain is Putative thymidine phosphorylase, found in Maricaulis maris (strain MCS10) (Caulobacter maris).